A 72-amino-acid chain; its full sequence is Translation initiation factor IF-1 (72 aa).

Residues 1-72 (MIKEDNIEMH…SKGRIIFRSR (72 aa)) enclose the S1-like domain.

It belongs to the IF-1 family. As to quaternary structure, component of the 30S ribosomal translation pre-initiation complex which assembles on the 30S ribosome in the order IF-2 and IF-3, IF-1 and N-formylmethionyl-tRNA(fMet); mRNA recruitment can occur at any time during PIC assembly.

The protein resides in the cytoplasm. Its function is as follows. One of the essential components for the initiation of protein synthesis. Stabilizes the binding of IF-2 and IF-3 on the 30S subunit to which N-formylmethionyl-tRNA(fMet) subsequently binds. Helps modulate mRNA selection, yielding the 30S pre-initiation complex (PIC). Upon addition of the 50S ribosomal subunit IF-1, IF-2 and IF-3 are released leaving the mature 70S translation initiation complex. The sequence is that of Translation initiation factor IF-1 from Blochmanniella floridana.